A 146-amino-acid chain; its full sequence is Large ribosomal subunit protein uL15 (146 aa).

Residues 1–42 (MTIKLHDLQPARGSKTTRTRVGRGEASKGKTAGRGTKGTKAR) form a disordered region.

This sequence belongs to the universal ribosomal protein uL15 family. As to quaternary structure, part of the 50S ribosomal subunit.

Binds to the 23S rRNA. The polypeptide is Large ribosomal subunit protein uL15 (Mycobacterium leprae (strain Br4923)).